The sequence spans 328 residues: NADH-quinone oxidoreductase subunit H 1 (328 aa).

Helical transmembrane passes span 11-31, 81-101, 116-136, 154-174, 189-209, 235-257, 269-289, and 308-328; these read VVKA…FLLF, LAPV…PWAP, VLVI…GGWA, ISYE…TGSV, LFPQ…EAGW, GLFF…TFFL, IPGF…LYWI, and VLLP…ALWA.

This sequence belongs to the complex I subunit 1 family. NDH-1 is composed of 14 different subunits. Subunits NuoA, H, J, K, L, M, N constitute the membrane sector of the complex.

The protein localises to the cell membrane. The catalysed reaction is a quinone + NADH + 5 H(+)(in) = a quinol + NAD(+) + 4 H(+)(out). NDH-1 shuttles electrons from NADH, via FMN and iron-sulfur (Fe-S) centers, to quinones in the respiratory chain. The immediate electron acceptor for the enzyme in this species is believed to be ubiquinone. Couples the redox reaction to proton translocation (for every two electrons transferred, four hydrogen ions are translocated across the cytoplasmic membrane), and thus conserves the redox energy in a proton gradient. This subunit may bind ubiquinone. In Symbiobacterium thermophilum (strain DSM 24528 / JCM 14929 / IAM 14863 / T), this protein is NADH-quinone oxidoreductase subunit H 1.